Consider the following 617-residue polypeptide: mRNA-decapping enzyme 1B (617 aa).

Position 2 is an N-acetylalanine (alanine 2). Serine 147 carries the post-translational modification Phosphoserine. Tyrosine 191 is subject to Phosphotyrosine. Disordered regions lie at residues 195–222 and 243–266; these read NLIK…LDPE and TVEP…KLPI. Residues 205-219 are compositionally biased toward polar residues; that stretch reads SENQQQRIPQPNQTL. Residues 252-261 are compositionally biased toward low complexity; it reads QQQQQQQQQQ. Phosphoserine occurs at positions 275 and 336. The segment at 362–426 is disordered; the sequence is TPGAANKCDP…VGHQAHGREQ (65 aa). The segment covering 371-381 has biased composition (low complexity); sequence PSTPAPASSAA. Threonine 392 is modified (phosphothreonine). Serine 448 and serine 511 each carry phosphoserine.

It belongs to the DCP1 family. As to quaternary structure, interacts with DCP1A. In terms of assembly, (Microbial infection) Interacts with rotavirus A non-structural protein 2; this interaction probably plays a role in the sequestration of DCP1B in viral factories. Interacts with rotavirus A non-structural protein 5; this interaction probably plays a role in its sequestration in viral factories.

It localises to the cytoplasm. It is found in the nucleus. It catalyses the reaction a 5'-end (N(7)-methyl 5'-triphosphoguanosine)-ribonucleoside in mRNA + H2O = N(7)-methyl-GDP + a 5'-end phospho-ribonucleoside in mRNA + 2 H(+). May play a role in the degradation of mRNAs, both in normal mRNA turnover and in nonsense-mediated mRNA decay. May remove the 7-methyl guanine cap structure from mRNA molecules, yielding a 5'-phosphorylated mRNA fragment and 7m-GDP. The sequence is that of mRNA-decapping enzyme 1B (DCP1B) from Homo sapiens (Human).